The following is a 321-amino-acid chain: MSKPIQMERGVKYRDADKMALIPVKTVVTERQELLRKPEWMKIKLPADSTRIQGIKAAMRKNGLHSVCEEASCPNLSECFNHGTATFMILGAICTRRCPFCDVAHGRPVAPDANEPEKLAQTIADMGLRYVVITSVDRDDLRDGGAQHFADCIAAIRAKNPTIKIETLVPDFRGRMDRALEILTETPPDVFNHNLENVPRVYRQVRPGANYEWSLKLLERFKEAHPHIPTKSGLMVGLGETNAEIVEVMRDLRRHGVTMLTLGQYLQPSRHHLPVQRYVSPAEFDEMKEEAMAMGFTHAACGPFVRSSYHADLQAKGMEVK.

Cys-68, Cys-73, Cys-79, Cys-94, Cys-98, Cys-101, and Ser-308 together coordinate [4Fe-4S] cluster. Residues 80–297 (FNHGTATFMI…KEEAMAMGFT (218 aa)) form the Radical SAM core domain.

This sequence belongs to the radical SAM superfamily. Lipoyl synthase family. It depends on [4Fe-4S] cluster as a cofactor.

The protein resides in the cytoplasm. It carries out the reaction [[Fe-S] cluster scaffold protein carrying a second [4Fe-4S](2+) cluster] + N(6)-octanoyl-L-lysyl-[protein] + 2 oxidized [2Fe-2S]-[ferredoxin] + 2 S-adenosyl-L-methionine + 4 H(+) = [[Fe-S] cluster scaffold protein] + N(6)-[(R)-dihydrolipoyl]-L-lysyl-[protein] + 4 Fe(3+) + 2 hydrogen sulfide + 2 5'-deoxyadenosine + 2 L-methionine + 2 reduced [2Fe-2S]-[ferredoxin]. The protein operates within protein modification; protein lipoylation via endogenous pathway; protein N(6)-(lipoyl)lysine from octanoyl-[acyl-carrier-protein]: step 2/2. Catalyzes the radical-mediated insertion of two sulfur atoms into the C-6 and C-8 positions of the octanoyl moiety bound to the lipoyl domains of lipoate-dependent enzymes, thereby converting the octanoylated domains into lipoylated derivatives. This chain is Lipoyl synthase, found in Serratia proteamaculans (strain 568).